A 683-amino-acid chain; its full sequence is Outer dynein arm-docking complex subunit 4 (683 aa).

TPR repeat units lie at residues 13–46 (FPSYMAEGERLYLCGEFAKAAHSFSNALHLQSGD), 47–80 (KNCLVARSKCFLKMGELEKSLEDAEASLQGDPTF), 48–80 (NCLVARSKCFLKMGELEKSLEDAEASLQGDPTF), and 81–114 (CKGILQKAETLYTMGDFEFALVFYHRGYKLRPDR). A disordered region spans residues 158 to 179 (QQKPHPVRQLIHHPKRESKRKG). Over residues 167–179 (LIHHPKRESKRKG) the composition is skewed to basic residues. TPR repeat units lie at residues 275–311 (LKSLEDIDMLLTSGSAEGSLQKAEKVLKKVLEWNKEE), 320–353 (GNLYSCIGNAQIELGQMVAALQSHRKDLEIAKEY), 360–393 (SRALDNIGRVFARVGKFQQAIDTWEEKIPLAKTT), 397–430 (TWLFHEIGRCYLELDQAWEAQSYGEKSQQCAEEE), and 437–470 (LNASVLVAQAQVKLRDFESAVNNFEKALERAKLV). Disordered stretches follow at residues 510 to 537 (ENATMLDGQTRTAKEKETRKTKDEPEKV) and 553 to 683 (VLSK…EPIE). Basic and acidic residues-rich tracts occupy residues 521-537 (TAKEKETRKTKDEPEKV), 566-590 (PEQRQREDPEKASWRKELGAKERGP), 602-620 (GRTEQNREETREIYRRPSE), and 629-675 (SSPR…IEKD). The stretch at 592 to 625 (DTAKGQFGEAGRTEQNREETREIYRRPSELDQNL) is one TPR 15 repeat.

In terms of assembly, component of the outer dynein arm-docking complex along with ODAD1, ODAD2 and ODAD3. Interacts with ODAD1; this interaction may facilitate the recruitment and/or attachment of outer dynein arm docking complex proteins, including ODAD1, ODAD3 and ODAD2, to ciliary axonemes. Interacts with components of the IFT complex A, including IFT140, TTC21B/IFT139 and WDR19/IFT144, and the IFT complex B, including IFT46, IFT52 and IFT57. Interacts with CFAP53. As to expression, expressed in trachea multiciliated cells.

The protein localises to the cytoplasm. Its subcellular location is the cytoskeleton. It localises to the cilium axoneme. Its function is as follows. Component of the outer dynein arm-docking complex (ODA-DC) that mediates outer dynein arms (ODA) binding onto the doublet microtubule. Plays an essential role for the assembly of ODA-DC and for the docking of ODA in ciliary axoneme. The sequence is that of Outer dynein arm-docking complex subunit 4 from Bos taurus (Bovine).